We begin with the raw amino-acid sequence, 527 residues long: MVEILDYTKALEVLKEYPSGDGLHVDTLLDSDNHGALTYNDFLILPGSITFSAADVSLDTKVTRRFTIKAPLLSSPMDTVTEHNMAIHMALLGGLGVIHNNCPPDDQAEMVRKVKRYENGFILDPVVLSPSTTVAEAKELKTKWNFGGFPVTEKGTLHSKLLGIVTSRDIQFHKTPEDPVTAVMSTDLVTAPAGTTLAEANEVLRSSKKGKLPIVDKDGLLVSLLSRSDLMKNIHYPLASKLPSKQLLCAAAISTHDADKVRLQKLVDAGLDIVVVDSSQGNSMYQIAMIKWIKSTFPDIDIIAGNIVTREQAAALIAAGADGLRIGMGSGSACITQEVMAVGRPQAASVRSVSAFAARFGVPTIADGGVQNLGHIVKGLALGASAVMMGSLLAGTTESPGEYYVSNEGQLVKAFRGMGSIAVMEDKGKSGGGKNAGASRYFSENDKVKVAQGVAGSVVDRGSITQYVPYLVAGIQHSLQDIGVQDLEALHTGVNNGQVRFEMRSASAQTEGNVHGLHSHEKKLYSS.

CBS domains lie at 121–183 (FILD…VTAV) and 184–240 (MSTD…PLAS). NAD(+) is bound by residues 277–279 (DSS) and 327–329 (GMG). K(+) contacts are provided by Gly-329 and Gly-331. Position 332 (Ser-332) interacts with IMP. Cys-334 contacts K(+). The Thioimidate intermediate role is filled by Cys-334. IMP contacts are provided by residues 367–369 (DGG) and 390–391 (GS). Arg-440 acts as the Proton acceptor in catalysis. Residue Gln-452 coordinates IMP. The interval 506 to 527 (ASAQTEGNVHGLHSHEKKLYSS) is disordered. The K(+) site is built by Glu-511 and Gly-512. A compositionally biased stretch (basic and acidic residues) spans 518-527 (HSHEKKLYSS).

Belongs to the IMPDH/GMPR family. In terms of assembly, homotetramer. It depends on K(+) as a cofactor.

The protein resides in the cytoplasm. It carries out the reaction IMP + NAD(+) + H2O = XMP + NADH + H(+). It participates in purine metabolism; XMP biosynthesis via de novo pathway; XMP from IMP: step 1/1. Mycophenolic acid (MPA) is a non-competitive inhibitor that prevents formation of the closed enzyme conformation by binding to the same site as the amobile flap. In contrast, mizoribine monophosphate (MZP) is a competitive inhibitor that induces the closed conformation. MPA is a potent inhibitor of mammalian IMPDHs but a poor inhibitor of the bacterial enzymes. MZP is a more potent inhibitor of bacterial IMPDH. Catalyzes the conversion of inosine 5'-phosphate (IMP) to xanthosine 5'-phosphate (XMP), the first committed and rate-limiting step in the de novo synthesis of guanine nucleotides, and therefore plays an important role in the regulation of cell growth. Part of the gene cluster that mediates the biosynthesis of mycophenolic acid (MPA), the first isolated antibiotic natural product in the world. Does not play a role in the biosynthesis of MPA, but is involved in self resistance to MPA, since MPA acts as an inhibitor of IMP dehydrogenases. The polypeptide is Inosine-5'-monophosphate dehydrogenase (Penicillium brevicompactum).